Reading from the N-terminus, the 968-residue chain is Probable transport protein MmpL2 (968 aa).

11 consecutive transmembrane segments (helical) span residues F22–P42, V204–I224, I245–T265, A297–A317, P328–L348, W378–P398, Y763–I783, V787–L807, I815–V835, T866–F886, and R890–V910.

Belongs to the resistance-nodulation-cell division (RND) (TC 2.A.6) family. MmpL subfamily.

It localises to the cell membrane. The sequence is that of Probable transport protein MmpL2 (mmpL2) from Mycobacterium tuberculosis (strain CDC 1551 / Oshkosh).